The following is a 633-amino-acid chain: DNA-directed RNA polymerase subunit gamma (633 aa).

Cys74, Cys76, Cys89, and Cys92 together coordinate Zn(2+). The Mg(2+) site is built by Asp471, Asp473, and Asp475.

It belongs to the RNA polymerase beta' chain family. RpoC1 subfamily. In cyanobacteria the RNAP catalytic core is composed of 2 alpha, 1 beta, 1 beta', 1 gamma and 1 omega subunit. When a sigma factor is associated with the core the holoenzyme is formed, which can initiate transcription. Requires Mg(2+) as cofactor. The cofactor is Zn(2+).

It carries out the reaction RNA(n) + a ribonucleoside 5'-triphosphate = RNA(n+1) + diphosphate. DNA-dependent RNA polymerase catalyzes the transcription of DNA into RNA using the four ribonucleoside triphosphates as substrates. The sequence is that of DNA-directed RNA polymerase subunit gamma from Prochlorococcus marinus (strain MIT 9211).